The chain runs to 283 residues: MLRIAVPNKGMLSEPAWNMLAEAGYRLRTNPRQLVVQDPDNGIELFYLRPLDIAVYVGRGAIDVGITGQDLLKNSGTAALEHMPLGFGTSTFRFAAPNESPITTLEDIQGKRVATTFDKLVHDYLVEHGIQAETIHLDGAVESSVQLGVADLIADVVSTGTTLRNAGLRVFAEPLMHSEACLIRSPRLNEQDSRLAVLTRRLQGVLTAHQYVLMDYDIPISKVAAAVAVTPGFESPTISPLHDKQWNAVRVMVPKAKVNQLMDDLYEVGARGIIVTALQASRM.

This sequence belongs to the ATP phosphoribosyltransferase family. Long subfamily. Requires Mg(2+) as cofactor.

The protein localises to the cytoplasm. It catalyses the reaction 1-(5-phospho-beta-D-ribosyl)-ATP + diphosphate = 5-phospho-alpha-D-ribose 1-diphosphate + ATP. It functions in the pathway amino-acid biosynthesis; L-histidine biosynthesis; L-histidine from 5-phospho-alpha-D-ribose 1-diphosphate: step 1/9. With respect to regulation, feedback inhibited by histidine. Catalyzes the condensation of ATP and 5-phosphoribose 1-diphosphate to form N'-(5'-phosphoribosyl)-ATP (PR-ATP). Has a crucial role in the pathway because the rate of histidine biosynthesis seems to be controlled primarily by regulation of HisG enzymatic activity. This chain is ATP phosphoribosyltransferase, found in Bifidobacterium longum (strain NCC 2705).